A 281-amino-acid polypeptide reads, in one-letter code: 4-diphosphocytidyl-2-C-methyl-D-erythritol kinase (281 aa).

The active site involves K15. 98 to 108 provides a ligand contact to ATP; sequence PTGAGLGGGSS. D140 is a catalytic residue.

This sequence belongs to the GHMP kinase family. IspE subfamily.

It carries out the reaction 4-CDP-2-C-methyl-D-erythritol + ATP = 4-CDP-2-C-methyl-D-erythritol 2-phosphate + ADP + H(+). Its pathway is isoprenoid biosynthesis; isopentenyl diphosphate biosynthesis via DXP pathway; isopentenyl diphosphate from 1-deoxy-D-xylulose 5-phosphate: step 3/6. Its function is as follows. Catalyzes the phosphorylation of the position 2 hydroxy group of 4-diphosphocytidyl-2C-methyl-D-erythritol. The polypeptide is 4-diphosphocytidyl-2-C-methyl-D-erythritol kinase (Neisseria meningitidis serogroup C (strain 053442)).